A 552-amino-acid chain; its full sequence is Transcription factor kayak (552 aa).

Disordered regions lie at residues 110-145 (LAQG…TDST) and 177-234 (GAAS…KRRV). The span at 111-127 (AQGSDSEDSNASYNDTQ) shows a compositional bias: polar residues. The span at 135 to 145 (TDTSSAHTDST) shows a compositional bias: low complexity. Positions 177 to 192 (GAASVGSSNANTSNTP) are enriched in polar residues. The 64-residue stretch at 212–275 (EQKRAVRRER…NQLEYCLAAH (64 aa)) folds into the bZIP domain. Residues 214-233 (KRAVRRERNKQAAARCRKRR) form a basic motif region. The interval 240-247 (LTEEVEQL) is leucine-zipper. Over residues 304–325 (AGSSGSGASSHHNHNSNDSSNG) the composition is skewed to low complexity. Disordered stretches follow at residues 304–346 (AGSS…PLDL), 365–390 (LDGA…TLPP), and 514–552 (GGTG…LVSL). Over residues 333-343 (TLNSTGRSNSP) the composition is skewed to polar residues. Ser342 is modified (phosphoserine).

This sequence belongs to the bZIP family. Fos subfamily. As to quaternary structure, homodimer. Heterodimer with Jra. The kay-Jra heterodimer binds more stably to the AP-1 site than either of the two proteins alone.

The protein localises to the nucleus. Developmentally regulated transcription factor AP-1 binds and recognizes the enhancer DNA sequence: 5'-TGA[CG]TCA-3'. May play a role in the function or determination of a particular subset of cells in the developing embryo. It is able to carry out its function either independently of or in conjunction with Jra. The chain is Transcription factor kayak from Drosophila yakuba (Fruit fly).